Here is a 1408-residue protein sequence, read N- to C-terminus: ABC transporter B family member 20 (1408 aa).

A disordered region spans residues 14 to 49 (HMQPLTPVSEVSEPPESPSPYLDPGAESGGGTGTAA). Residues 20-39 (PVSEVSEPPESPSPYLDPGA) are compositionally biased toward low complexity. The chain crosses the membrane as a helical span at residues 86 to 106 (VLMIVGSVAAAAHGTALIVYL). The 294-residue stretch at 88-381 (MIVGSVAAAA…AATNFYSFDQ (294 aa)) folds into the ABC transmembrane type-1 1 domain. An N-linked (GlcNAc...) asparagine glycan is attached at N120. 3 helical membrane-spanning segments follow: residues 141–161 (IVYIAGGVFISGWIEVSCWIL), 214–233 (VGNYIHNMATFISGLVIGFV), and 238–260 (IALITLATGPFIVAAGGISNIFL). Residue N293 is glycosylated (N-linked (GlcNAc...) asparagine). Transmembrane regions (helical) follow at residues 312-332 (GILISLVQGLGLGFTYGLAIC) and 353-373 (GEIIAALFAVILSGLGLNQAA). One can recognise an ABC transporter 1 domain in the interval 414 to 649 (IEFRNVYFSY…GGLYAELLKC (236 aa)). An ATP-binding site is contributed by 449-456 (GRNGSGKS). A glycan (N-linked (GlcNAc...) asparagine) is linked at N451. Disordered stretches follow at residues 676–735 (SSAG…SLDC) and 752–816 (LPHL…DAQH). Positions 762 to 771 (CPQQKSNGSE) are enriched in polar residues. N768 carries N-linked (GlcNAc...) asparagine glycosylation. Residues 802-816 (DDTKANGKASKDAQH) are compositionally biased toward basic and acidic residues. The ABC transmembrane type-1 2 domain occupies 836–1124 (AVLGSLGAAI…PFGLAPYILK (289 aa)). 6 helical membrane-spanning segments follow: residues 841–861 (LGAAIFGSFNPLLAYVIALVV), 881–901 (LIIACMGIVTVVANFLQHFYF), 959–979 (IFIQDSFAVIVALLIGLLLGW), 983–1003 (LVALATLPILTLSAIAQKLWL), 1062–1082 (IGFAFGFSQFLLFACNALLLW), and 1103–1123 (MVFSFATFALVEPFGLAPYIL). One can recognise an ABC transporter 2 domain in the interval 1159–1396 (IELKNVDFCY…NGLYVRLMQP (238 aa)). N1179 carries an N-linked (GlcNAc...) asparagine glycan. 1194-1201 (GVSGSGKS) contacts ATP. N-linked (GlcNAc...) asparagine glycans are attached at residues N1261 and N1347.

This sequence belongs to the ABC transporter superfamily. ABCB family. Multidrug resistance exporter (TC 3.A.1.201) subfamily. In terms of tissue distribution, expressed in aerial tissues.

The protein resides in the membrane. The catalysed reaction is (indol-3-yl)acetate(in) + ATP + H2O = (indol-3-yl)acetate(out) + ADP + phosphate + H(+). Functionally, probable auxin efflux transporter that contributes, together with ABCB6 and in a FKBP42/TWD1-dependent manner, to the regulation of leaf position and morphology, internode distribution, roots development, and inflorescence organization, probably by modulating auxin repartition. The polypeptide is ABC transporter B family member 20 (Arabidopsis thaliana (Mouse-ear cress)).